We begin with the raw amino-acid sequence, 1210 residues long: ATP-dependent helicase/nuclease subunit A (1210 aa).

The UvrD-like helicase ATP-binding domain occupies 27–483; sequence QKRTAQQIEA…ILLKENFRSQ (457 aa). 48 to 55 is an ATP binding site; the sequence is ASAGSGKT. The region spanning 512–798 is the UvrD-like helicase C-terminal domain; the sequence is QLIAGSHAQT…NLMTIHKSKG (287 aa).

This sequence belongs to the helicase family. AddA subfamily. As to quaternary structure, heterodimer of AddA and AddB/RexB. It depends on Mg(2+) as a cofactor.

The enzyme catalyses Couples ATP hydrolysis with the unwinding of duplex DNA by translocating in the 3'-5' direction.. It carries out the reaction ATP + H2O = ADP + phosphate + H(+). In terms of biological role, the heterodimer acts as both an ATP-dependent DNA helicase and an ATP-dependent, dual-direction single-stranded exonuclease. Recognizes the chi site generating a DNA molecule suitable for the initiation of homologous recombination. The AddA nuclease domain is required for chi fragment generation; this subunit has the helicase and 3' -&gt; 5' nuclease activities. In Streptococcus pyogenes serotype M5 (strain Manfredo), this protein is ATP-dependent helicase/nuclease subunit A.